The sequence spans 65 residues: Large ribosomal subunit protein bL35 (65 aa).

A disordered region spans residues M1–R29.

Belongs to the bacterial ribosomal protein bL35 family.

In Kocuria rhizophila (strain ATCC 9341 / DSM 348 / NBRC 103217 / DC2201), this protein is Large ribosomal subunit protein bL35.